The following is a 467-amino-acid chain: Pachytene checkpoint protein 2 homolog (467 aa).

209–216 (GPPGTGKT) is a binding site for ATP.

The protein belongs to the AAA ATPase family. PCH2 subfamily.

The protein resides in the chromosome. In terms of biological role, plays a key role in chromosome recombination during meiosis. Mediates meiotic chromosome remodeling and crossover maturation. This is Pachytene checkpoint protein 2 homolog from Arabidopsis thaliana (Mouse-ear cress).